The following is a 601-amino-acid chain: Putative Lon protease homolog (601 aa).

The 198-residue stretch at 363 to 560 (GEIVGQINGL…YQACELLFGR (198 aa)) folds into the Lon proteolytic domain. Active-site residues include S455 and K498.

Belongs to the peptidase S16 family.

In Haemophilus influenzae (strain ATCC 51907 / DSM 11121 / KW20 / Rd), this protein is Putative Lon protease homolog.